We begin with the raw amino-acid sequence, 87 residues long: uncharacterized protein (87 aa).

A run of 2 helical transmembrane segments spans residues 10-30 and 43-63; these read VAFTVLAYFTFFAGVFLFSIG and GYYIAVMILVAVGAILTQKVT.

The protein localises to the cell membrane. This is an uncharacterized protein from Bacillus subtilis (strain 168).